The following is a 120-amino-acid chain: ATP-dependent Clp protease adapter protein ClpS (120 aa).

Belongs to the ClpS family. As to quaternary structure, binds to the N-terminal domain of the chaperone ClpA.

Involved in the modulation of the specificity of the ClpAP-mediated ATP-dependent protein degradation. The chain is ATP-dependent Clp protease adapter protein ClpS from Azotobacter vinelandii (strain DJ / ATCC BAA-1303).